The chain runs to 259 residues: Triosephosphate isomerase (259 aa).

10 to 12 contributes to the substrate binding site; sequence NWK. Histidine 100 (electrophile) is an active-site residue. Glutamate 172 acts as the Proton acceptor in catalysis. Residues glycine 178, serine 218, and 239–240 contribute to the substrate site; that span reads GG.

The protein belongs to the triosephosphate isomerase family. Homodimer.

It localises to the cytoplasm. It carries out the reaction D-glyceraldehyde 3-phosphate = dihydroxyacetone phosphate. The protein operates within carbohydrate biosynthesis; gluconeogenesis. It functions in the pathway carbohydrate degradation; glycolysis; D-glyceraldehyde 3-phosphate from glycerone phosphate: step 1/1. Functionally, involved in the gluconeogenesis. Catalyzes stereospecifically the conversion of dihydroxyacetone phosphate (DHAP) to D-glyceraldehyde-3-phosphate (G3P). This is Triosephosphate isomerase from Corynebacterium glutamicum (strain ATCC 13032 / DSM 20300 / JCM 1318 / BCRC 11384 / CCUG 27702 / LMG 3730 / NBRC 12168 / NCIMB 10025 / NRRL B-2784 / 534).